Here is a 421-residue protein sequence, read N- to C-terminus: Testin (421 aa).

One can recognise a PET domain in the interval 92–199 (MILTNPVAAK…GDVKLPREMN (108 aa)). The tract at residues 133–164 (EKQPVAGSEGAQYRKKQLAKQLPAHDQDPSKC) is disordered. Residues 155–164 (PAHDQDPSKC) show a composition bias toward basic and acidic residues. 3 LIM zinc-binding domains span residues 234–297 (YSCY…CDSE), 299–359 (PRCA…NHAV), and 362–421 (QGCH…KMMS).

Belongs to the prickle / espinas / testin family. In terms of assembly, interacts via LIM domain 1 with ZYX. Interacts (via LIM domain 3) with ENAH and VASP. Interacts with ALKBH4, talin, actin, alpha-actinin, GRIP1 and PXN. Interacts (via LIM domain 2) with ACTL7A (via N-terminus). Heterodimer with ACTL7A; the heterodimer interacts with ENAH to form a heterotrimer.

It is found in the cytoplasm. The protein resides in the cell junction. The protein localises to the focal adhesion. Functionally, scaffold protein that may play a role in cell adhesion, cell spreading and in the reorganization of the actin cytoskeleton. Plays a role in the regulation of cell proliferation. May act as a tumor suppressor. The sequence is that of Testin (TES) from Sus scrofa (Pig).